Consider the following 418-residue polypeptide: uncharacterized protein (418 aa).

Residues 282 to 297 (EEHSSIAKLDSEEKIR) show a composition bias toward basic and acidic residues. A disordered region spans residues 282 to 346 (EEHSSIAKLD…SASVDDVSEE (65 aa)). Low complexity predominate over residues 304 to 316 (SSTSLSPDPTSDN). A compositionally biased stretch (polar residues) spans 322–337 (WVSSQDTSKNSSNLAS).

This is an uncharacterized protein from Schizosaccharomyces pombe (strain 972 / ATCC 24843) (Fission yeast).